The sequence spans 147 residues: Leech anti-platelet protein (147 aa).

An N-terminal signal peptide occupies residues 1–21; the sequence is MNSFLFSLACSLLVAIPAISA. Residues 21–71 are disordered; the sequence is AQDEDAGGAGDETSEGEDTTGSDETPSTGGGGDGGNEETITAGNEDCWSKR. Positions 22–41 are enriched in acidic residues; the sequence is QDEDAGGAGDETSEGEDTTG. 3 disulfide bridges follow: cysteine 67-cysteine 145, cysteine 92-cysteine 117, and cysteine 96-cysteine 105.

In terms of processing, the N-terminus is blocked. Expressed by salivary glands.

The protein localises to the secreted. Functionally, inhibits collagen-stimulated platelet aggregation (IC(50)=60 nM), dense granule release and serotonin release. Does not inhibit platelet aggregation induced by ADP, arachidonic acid, and thrombin. The polypeptide is Leech anti-platelet protein (Haementeria officinalis (Mexican leech)).